A 340-amino-acid chain; its full sequence is Phosphoribosylformylglycinamidine cyclo-ligase (340 aa).

Belongs to the AIR synthase family.

Its subcellular location is the cytoplasm. It catalyses the reaction 2-formamido-N(1)-(5-O-phospho-beta-D-ribosyl)acetamidine + ATP = 5-amino-1-(5-phospho-beta-D-ribosyl)imidazole + ADP + phosphate + H(+). It functions in the pathway purine metabolism; IMP biosynthesis via de novo pathway; 5-amino-1-(5-phospho-D-ribosyl)imidazole from N(2)-formyl-N(1)-(5-phospho-D-ribosyl)glycinamide: step 2/2. This is Phosphoribosylformylglycinamidine cyclo-ligase from Macrococcus caseolyticus (strain JCSC5402) (Macrococcoides caseolyticum).